Reading from the N-terminus, the 86-residue chain is Large ribosomal subunit protein bL27 (86 aa).

Residues 1 to 21 are disordered; sequence MAHKKGGGSSRNGRDSESKRL.

The protein belongs to the bacterial ribosomal protein bL27 family.

The polypeptide is Large ribosomal subunit protein bL27 (Rubrobacter xylanophilus (strain DSM 9941 / JCM 11954 / NBRC 16129 / PRD-1)).